We begin with the raw amino-acid sequence, 481 residues long: Phosphoglucosamine mutase (481 aa).

The active-site Phosphoserine intermediate is Ser-128. Mg(2+) contacts are provided by Ser-128, Asp-269, Asp-271, and Asp-273. Ser-128 carries the post-translational modification Phosphoserine.

It belongs to the phosphohexose mutase family. Requires Mg(2+) as cofactor. Post-translationally, activated by phosphorylation.

The enzyme catalyses alpha-D-glucosamine 1-phosphate = D-glucosamine 6-phosphate. Catalyzes the conversion of glucosamine-6-phosphate to glucosamine-1-phosphate. This is Phosphoglucosamine mutase from Synechocystis sp. (strain ATCC 27184 / PCC 6803 / Kazusa).